Consider the following 80-residue polypeptide: MIRSIFLGLIRFYQIVLSPLKGPRCRFLPTCSQYAYEAIERYGIWRGLFLGGKRLLRCHPFHAGGYDPVPRPSANNHPSR.

Belongs to the UPF0161 family.

The protein localises to the cell inner membrane. Its function is as follows. Could be involved in insertion of integral membrane proteins into the membrane. This chain is Putative membrane protein insertion efficiency factor, found in Syntrophobacter fumaroxidans (strain DSM 10017 / MPOB).